We begin with the raw amino-acid sequence, 253 residues long: Tetraspanin-11 (253 aa).

3 helical membrane-spanning segments follow: residues 19–39 (LLFIFNFFFWVGGAAVMAVGI), 63–83 (ILIFVGGLVMTTGFLGFGAII), and 93–113 (YFCLLLVIFLVELVAGVLAHV). An N-linked (GlcNAc...) asparagine glycan is attached at asparagine 127. The helical transmembrane segment at 220 to 240 (LLLMGAVGIGVACLQICGMVL) threads the bilayer.

This sequence belongs to the tetraspanin (TM4SF) family.

The protein resides in the membrane. The chain is Tetraspanin-11 (Tspan11) from Mus musculus (Mouse).